The following is a 1272-amino-acid chain: Protein diaphanous homolog 1 (1272 aa).

Met-1 carries the N-acetylmethionine modification. Over residues 1 to 12 (MEPPGGSLGPGR) the composition is skewed to gly residues. The segment at 1 to 84 (MEPPGGSLGP…YGDDPTAQSL (84 aa)) is disordered. Phosphoserine is present on residues Ser-7, Ser-22, and Ser-36. The segment covering 44–65 (LMADELERFTSMRIKKEKEKPN) has biased composition (basic and acidic residues). Polar residues predominate over residues 67-84 (AHRNSSASYGDDPTAQSL). One can recognise a GBD/FH3 domain in the interval 84–449 (LQDVSDEQVL…QIVLHKNGAD (366 aa)). Positions 468–572 (MIDKTKVEKS…ASLSAAAITV (105 aa)) form a coiled coil. The interval 573 to 755 (PPSVPSRAPV…GMPPPPPFGF (183 aa)) is disordered. 3 stretches are compositionally biased toward pro residues: residues 574–589 (PSVPSRAPVPPAPPLP), 596–622 (IPPPPAPGDSTTPPPPPPPPPPPPPLP), and 640–658 (SPPPPLSGDATIPPPPPLP). One can recognise an FH1 domain in the interval 583–764 (PPAPPLPGDS…FGVPAAPVLP (182 aa)). Residues 659–674 (EGVGIPSPSSLPGGTA) show a composition bias toward low complexity. Residues 675–753 (IPPPPPLPGS…GMGMPPPPPF (79 aa)) are compositionally biased toward pro residues. Thr-768 bears the Phosphothreonine mark. The FH2 domain occupies 769–1171 (PKKLYKPEVQ…MRRAKLAKEK (403 aa)). Residues 1039–1196 (DELAHVEKAS…IDMNAEGDET (158 aa)) adopt a coiled-coil conformation. N6-acetyllysine is present on residues Lys-1057 and Lys-1103. Tyr-1121 is modified (phosphotyrosine). Residues 1194–1222 (DETGVMDSLLEALQSGAAFRRKRGPRQAN) enclose the DAD domain. Phosphoserine is present on residues Ser-1251 and Ser-1254.

This sequence belongs to the formin homology family. Diaphanous subfamily. Homodimer. Interacts with the GTP-bound form of RHOA. Interacts with RHOC, PFY1, MAPRE1 and BAIAP2. Interacts with APC; acts as a scaffold protein for MAPRE1 and APC to stabilize microtubules and promote cell migration. Interacts with SCAI. Interacts with DCAF7, via FH2 domain. Interacts with NCDN. Interacts with OSBPL10, OSBPL2, VIM, TUBB and DYN1. Post-translationally, phosphorylation at Thr-768 is stimulated by cAMP and regulates stability, complex formation and mitochondrial movement. Expressed in brain, heart, placenta, lung, kidney, pancreas, liver, skeletal muscle and cochlea. Expressed in platelets.

Its subcellular location is the cell membrane. The protein localises to the cell projection. The protein resides in the ruffle membrane. It localises to the cytoplasm. It is found in the cytoskeleton. Its subcellular location is the microtubule organizing center. The protein localises to the centrosome. The protein resides in the spindle. It localises to the nucleus. Actin nucleation and elongation factor required for the assembly of F-actin structures, such as actin cables and stress fibers. Binds to the barbed end of the actin filament and slows down actin polymerization and depolymerization. Required for cytokinesis, and transcriptional activation of the serum response factor. DFR proteins couple Rho and Src tyrosine kinase during signaling and the regulation of actin dynamics. Functions as a scaffold protein for MAPRE1 and APC to stabilize microtubules and promote cell migration. Has neurite outgrowth promoting activity. Acts in a Rho-dependent manner to recruit PFY1 to the membrane. In hear cells, it may play a role in the regulation of actin polymerization in hair cells. The MEMO1-RHOA-DIAPH1 signaling pathway plays an important role in ERBB2-dependent stabilization of microtubules at the cell cortex. It controls the localization of APC and CLASP2 to the cell membrane, via the regulation of GSK3B activity. In turn, membrane-bound APC allows the localization of the MACF1 to the cell membrane, which is required for microtubule capture and stabilization. Plays a role in the regulation of cell morphology and cytoskeletal organization. Required in the control of cell shape. Plays a role in brain development. Also acts as an actin nucleation and elongation factor in the nucleus by promoting nuclear actin polymerization inside the nucleus to drive serum-dependent SRF-MRTFA activity. This Homo sapiens (Human) protein is Protein diaphanous homolog 1 (DIAPH1).